A 181-amino-acid chain; its full sequence is Thioredoxin-like protein CITRX2, chloroplastic (181 aa).

A chloroplast-targeting transit peptide spans 1-70 (MQAATLSFQP…PDVATGKYVR (70 aa)). The region spanning 72-181 (DYLVKKVSAK…MMRDIINNDL (110 aa)) is the Thioredoxin domain. Residues cysteine 104 and cysteine 107 each act as nucleophile in the active site. Cysteine 104 and cysteine 107 are oxidised to a cystine.

It belongs to the thioredoxin family. Plant CITRX-type subfamily.

The protein resides in the plastid. It is found in the chloroplast. Probable thiol-disulfide oxidoreductase that may play a role in proper chloroplast development. This is Thioredoxin-like protein CITRX2, chloroplastic from Nicotiana benthamiana.